The chain runs to 106 residues: DNA-directed RNA polymerase subunit omega (106 aa).

Residues 76-106 (REPAREAAEPAGEAPEEQQRAAGEREDQGAA) are disordered. Positions 92 to 106 (EQQRAAGEREDQGAA) are enriched in basic and acidic residues.

The protein belongs to the RNA polymerase subunit omega family. In terms of assembly, the RNAP catalytic core consists of 2 alpha, 1 beta, 1 beta' and 1 omega subunit. When a sigma factor is associated with the core the holoenzyme is formed, which can initiate transcription.

The catalysed reaction is RNA(n) + a ribonucleoside 5'-triphosphate = RNA(n+1) + diphosphate. Its function is as follows. Promotes RNA polymerase assembly. Latches the N- and C-terminal regions of the beta' subunit thereby facilitating its interaction with the beta and alpha subunits. The protein is DNA-directed RNA polymerase subunit omega of Rubrobacter xylanophilus (strain DSM 9941 / JCM 11954 / NBRC 16129 / PRD-1).